The sequence spans 108 residues: Thiosulfate sulfurtransferase GlpE (108 aa).

Residues 17–105 form the Rhodanese domain; sequence KDGSAALVDI…WARQYPQDVE (89 aa). Residue Cys-65 is the Cysteine persulfide intermediate of the active site.

The protein belongs to the GlpE family.

The protein resides in the cytoplasm. The enzyme catalyses thiosulfate + hydrogen cyanide = thiocyanate + sulfite + 2 H(+). It carries out the reaction thiosulfate + [thioredoxin]-dithiol = [thioredoxin]-disulfide + hydrogen sulfide + sulfite + 2 H(+). In terms of biological role, transferase that catalyzes the transfer of sulfur from thiosulfate to thiophilic acceptors such as cyanide or dithiols. May function in a CysM-independent thiosulfate assimilation pathway by catalyzing the conversion of thiosulfate to sulfite, which can then be used for L-cysteine biosynthesis. The polypeptide is Thiosulfate sulfurtransferase GlpE (Serratia proteamaculans (strain 568)).